The primary structure comprises 561 residues: MESRGRRCPEMISVLGPISGHVLKAVFSRGDTPVLPHETRLLQTGIHVRVSQPSLILVSQYTPDSTPCHRGDNQLQVQHTYFTGSEVENVSVNVHNPTGRSICPSQEPMSIYVYALPLKMLNIPSINVHHYPSAAERKHRHLPVADAVIHASGKQMWQARLTVSGLAWTRQQNQWKEPDVYYTSAFVFPTKDVALRHVVCAHELVCSMENTRATKMQVIGDQYVKVYLESFCEDVPSGKLFMHVTLGSDVEEDLTMTRNPQPFMRPHERNGFTVLCPKNMIIKPGKISHIMLDVAFTSHEHFGLLCPKSIPGLSISGNLLMNGQQIFLEVQAIRETVELRQYDPVAALFFFDIDLLLQRGPQYSEHPTFTSQYRIQGKLEYRHTWDRHDEGAAQGDDDVWTSGSDSDEELVTTERKTPRVTGGGAMAGASTSAGRKRKSASSATACTSGVMTRGRLKAESTVAPEEDTDEDSDNEIHNPAVFTWPPWQAGILARNLVPMVATVQGQNLKYQEFFWDANDIYRIFAELEGVWQPAAQPKRRRHRQDALPGPCIASTPKKHRG.

Disordered regions lie at residues 389–475 (DEGA…SDNE) and 534–561 (AAQP…KHRG). Positions 395–411 (GDDDVWTSGSDSDEELV) are enriched in acidic residues. Residues 440–449 (ASSATACTSG) show a composition bias toward low complexity. The segment covering 464-473 (PEEDTDEDSD) has biased composition (acidic residues). Ser-472 bears the Phosphoserine mark. The Bipartite nuclear localization signal signature appears at 537–560 (PKRRRHRQDALPGPCIASTPKKHR).

This sequence belongs to the herpesviridae pp65 family. Interacts with host NCL/nucleolin. Interacts with host IFI16. Interacts with host CGAS; this interaction inhibits CGAS enzymatic activity. Phosphorylation may play a role in the localization of the protein.

The protein localises to the virion tegument. It localises to the host nucleus. It is found in the host cytoplasm. In terms of biological role, counteracts the host antiviral immune response when activated and phosphorylated, by preventing host IRF3 from entering the nucleus. Also inhibits the type I interferon production by inactivating the enzymatic activity of DNA sensor CGAS without affecting STING1. Participates in the transactivation of viral major immediate-early genes by the recruitment of host IFI16 to the promoters pf these genes. This is 65 kDa phosphoprotein (UL83) from Human cytomegalovirus (strain AD169) (HHV-5).